The primary structure comprises 971 residues: uncharacterized protein (971 aa).

Transmembrane regions (helical) follow at residues Trp11–Phe31, Phe516–Ile536, Leu547–Val567, Val569–Leu589, Phe615–Leu635, Ala651–Ser671, Leu727–Gly747, Ser763–Pro783, Ile795–Phe815, Ile817–Ala837, Ile878–Ile898, Gly900–Val920, and Leu923–Ile943.

It localises to the cell membrane. This is an uncharacterized protein from Mycoplasma pneumoniae (strain ATCC 29342 / M129 / Subtype 1) (Mycoplasmoides pneumoniae).